A 106-amino-acid chain; its full sequence is Diptericin A (106 aa).

Positions 1 to 19 (MQFTIAVALLCCAIASTLA) are cleaved as a signal peptide. The propeptide at 20 to 23 (YPMP) is removed by a dipeptidylpeptidase.

The protein belongs to the attacin/sarcotoxin-2 family.

The protein localises to the secreted. Antimicrobial peptide required to resist Gram-negative bacterial infections, regulated by Dredd. This is Diptericin A from Drosophila melanogaster (Fruit fly).